Consider the following 467-residue polypeptide: MNEPNSWVEWVDPELDVDEAAVPQPVVAVVGRPNVGKSTLVNRLIGRRQAVVEDVPGVTRDRVPYDAQWNGRQFAVVDTGGWEPDAKDRAAAIAAQAESAITTADVVLFVVDAVVGATDVDEAAVKMLRRSAKPVILVANKADNSSIEMEASALWSLGLGEPYPVSALHGRGSGELLDLILDRLPEAPKIVEDRPRGPRRVALVGRPNVGKSSLLNRFSGEIRAVVDAVAGTTVDPVDSLVEIGGEAWQLVDTAGLRKRVGQASGTEYYASLRTTSAIEAAEVAVVLLDASEVISEQDQRILSMVTDAGRALVIAFNKWDLVDADRRYYLDREIERELRRIPWAIRLNLSARTGRAVDKLAPALRRALASWETRVPTAQLNAWLTALVQATPHPVRGGRAPKILFATQAGAAPPRFVLFTTGPLDAGYQRFVERKLREEFGFEGSPIEISVRARKKLGPGGRGKAHG.

EngA-type G domains follow at residues 25–188 and 199–372; these read PVVA…PEAP and RRVA…ASWE. Residues 31–38, 78–82, 140–143, 205–212, 252–256, and 317–320 contribute to the GTP site; these read GRPNVGKS, DTGGW, NKAD, DTAGL, and NKWD. The 83-residue stretch at 373 to 455 folds into the KH-like domain; sequence TRVPTAQLNA…PIEISVRARK (83 aa).

The protein belongs to the TRAFAC class TrmE-Era-EngA-EngB-Septin-like GTPase superfamily. EngA (Der) GTPase family. In terms of assembly, associates with the 50S ribosomal subunit.

Its function is as follows. GTPase that plays an essential role in the late steps of ribosome biogenesis. The chain is GTPase Der from Salinispora tropica (strain ATCC BAA-916 / DSM 44818 / JCM 13857 / NBRC 105044 / CNB-440).